Reading from the N-terminus, the 249-residue chain is Vitamin B12 import ATP-binding protein BtuD (249 aa).

The 229-residue stretch at 5-233 folds into the ABC transporter domain; the sequence is MQLQDVAETT…PNLAQAYGMN (229 aa). 33–40 serves as a coordination point for ATP; the sequence is GPNGAGKS.

This sequence belongs to the ABC transporter superfamily. Vitamin B12 importer (TC 3.A.1.13.1) family. In terms of assembly, the complex is composed of two ATP-binding proteins (BtuD), two transmembrane proteins (BtuC) and a solute-binding protein (BtuF).

It is found in the cell inner membrane. The enzyme catalyses an R-cob(III)alamin(out) + ATP + H2O = an R-cob(III)alamin(in) + ADP + phosphate + H(+). Its function is as follows. Part of the ABC transporter complex BtuCDF involved in vitamin B12 import. Responsible for energy coupling to the transport system. This chain is Vitamin B12 import ATP-binding protein BtuD, found in Citrobacter koseri (strain ATCC BAA-895 / CDC 4225-83 / SGSC4696).